Consider the following 392-residue polypeptide: Putative nickel insertion protein (392 aa).

It belongs to the LarC family.

The protein is Putative nickel insertion protein of Methanothrix thermoacetophila (strain DSM 6194 / JCM 14653 / NBRC 101360 / PT) (Methanosaeta thermophila).